A 156-amino-acid chain; its full sequence is Small ribosomal subunit protein uS7 (156 aa).

This sequence belongs to the universal ribosomal protein uS7 family. As to quaternary structure, part of the 30S ribosomal subunit. Contacts proteins S9 and S11.

Functionally, one of the primary rRNA binding proteins, it binds directly to 16S rRNA where it nucleates assembly of the head domain of the 30S subunit. Is located at the subunit interface close to the decoding center, probably blocks exit of the E-site tRNA. This Clostridium botulinum (strain 657 / Type Ba4) protein is Small ribosomal subunit protein uS7.